A 414-amino-acid chain; its full sequence is 2,3-diketo-5-methylthiopentyl-1-phosphate enolase (414 aa).

K99 serves as the catalytic Proton acceptor. Substrate contacts are provided by residues K148, 174–177, H265, G338, and 360–361; these read KDDE and GG. Mg(2+) is bound by residues K174, D176, and E177. N6-carboxylysine is present on K174.

It belongs to the RuBisCO large chain family. Type IV subfamily. Homodimer. Requires Mg(2+) as cofactor.

The catalysed reaction is 5-methylsulfanyl-2,3-dioxopentyl phosphate = 2-hydroxy-5-methylsulfanyl-3-oxopent-1-enyl phosphate. The protein operates within amino-acid biosynthesis; L-methionine biosynthesis via salvage pathway; L-methionine from S-methyl-5-thio-alpha-D-ribose 1-phosphate: step 3/6. Functionally, catalyzes the enolization of 2,3-diketo-5-methylthiopentyl-1-phosphate (DK-MTP-1-P) into 2-hydroxy-3-keto-5-methylthiopentenyl-1-phosphate (HK-MTPenyl-1-P). The protein is 2,3-diketo-5-methylthiopentyl-1-phosphate enolase of Bacillus cereus (strain AH187).